A 566-amino-acid chain; its full sequence is Alpha-amylase (566 aa).

The first 28 residues, 1–28 (MARRLATASLAVLAAAATALTAPTPAAA), serve as a signal peptide directing secretion. Residues N120, Q166, and D175 each coordinate Ca(2+). Catalysis depends on D205, which acts as the Nucleophile. Residue H209 participates in Ca(2+) binding. The active-site Proton donor is the E232. Positions 465-566 (GPGTGQTSAS…ALTLNDTWRG (102 aa)) constitute a CBM20 domain.

Belongs to the glycosyl hydrolase 13 family. As to quaternary structure, monomer. The cofactor is Ca(2+).

It carries out the reaction Endohydrolysis of (1-&gt;4)-alpha-D-glucosidic linkages in polysaccharides containing three or more (1-&gt;4)-alpha-linked D-glucose units.. The protein is Alpha-amylase (amy) of Streptomyces griseus.